The sequence spans 338 residues: Arginine N-succinyltransferase subunit alpha (338 aa).

Belongs to the succinylarginine dihydrolase family. Heterotetramer of two alpha and two beta subunits.

It catalyses the reaction succinyl-CoA + L-arginine = N(2)-succinyl-L-arginine + CoA + H(+). It participates in amino-acid degradation; L-arginine degradation via AST pathway; L-glutamate and succinate from L-arginine: step 1/5. Its function is as follows. Catalyzes the transfer of succinyl-CoA to arginine to produce N(2)-succinylarginine. Also acts on L-ornithine. This is Arginine N-succinyltransferase subunit alpha (astA) from Pseudomonas aeruginosa (strain ATCC 15692 / DSM 22644 / CIP 104116 / JCM 14847 / LMG 12228 / 1C / PRS 101 / PAO1).